We begin with the raw amino-acid sequence, 73 residues long: MNLGLAIFLIIIALLIGLVGGFYGARAYMKKYFQDNPPISEDMIAAMMAQMGQKPSAKKLNQVMNMMKHQQQK.

A helical transmembrane segment spans residues 3–23; the sequence is LGLAIFLIIIALLIGLVGGFY.

It belongs to the UPF0154 family.

The protein resides in the cell membrane. The protein is UPF0154 protein LJ_1506 of Lactobacillus johnsonii (strain CNCM I-12250 / La1 / NCC 533).